Reading from the N-terminus, the 1145-residue chain is MADTKLTDQQVADLNTILRSDSPLDAKVQYVTIIKSGIKQHNVPESSVAQLFEGLRAATTSQHAALVNAGFTALNHLLTRLSRQDPKLLSKEAARTLPLVVDKLGDQKDKFRSLASHSLVTLFSVAPADVEKYVRNTAMVGKNPRAKETSMHWLLQMHNENGLPFRTYVPVLMELLEDADGMVRDAAKNTVIELFRSAPNAAKSDLKRQLKTFKVRPAIEQAIVKELIPTSSRPETPAAPAEPTPEPAPRKTFSASTSSAAERPITPGIDTKPEVLEPLYVNTNRELDDMIKEMAWFFEGKETEHNWLKRENSVHKLRRLIAGNVTDFSDTFLAGVKSILDGIIKVITSLRTSLCKEGCGLIQEIAYTFGPAMDPLIEQLMQCFVKLSAGTKKISSQLANVTVNTILSQVTYTPRLMQHIWFACQDKNVAPRTYATEWLKTILKKEGHHKHHLEHTGGVDIVEKCLKKGLADANPAVREKTRSTFWVFWGIWPAKADAIMADLDGTAQKLLNKDPSNPNSAKAAESVARPGLGLSKSTMGTSKPSSIREAMMAQRKANAAKNLPARPGSAMAQLSPEKITTTTSSASSKSSGARSRPETGGMSGAPMRPSRKRPEMAARPATAGPYSVRDMDPGSPESVRSKTPKPRETTPKRTVPRTRPGHASHASESSLASPSSVRTGQKSAASPRASPTKLKQSQSTMLSMSSPSRADEDFTMLVPSMANFRTSQRPAPPPQRAASVPPEAPEELSTLVTEIAPQNIPQAAAEPTSQPTLEPELEPQPEPEATPTPVVDPVAEAVDQTMDETVKPEEPVHIIPEPVIEPTPEPSASMQADQAPAASAPTLQVYEDPFTDEQTNSKPTFNLPVLEDKPVNADTASLPSVHAQSPVTQNIEAPDRAKQSLRLLESGIKRIKAKTLDVHGFRKLQSLLRDSKGIFADDKFEALLIGLFQYLEDPLSGTSPEKAQDIKAQILATIRLLLKKERDNFQPHVSRGLESLLETRSAYDIRAHIVSGVEVLADELVTIGDGSEIVVVLTRRLQNVDSSTTEGSRILSTGMHVLRTMLDKRPNFMPTGTELGQLAALAGRCLASADSGVRMDAVQLCVALHSRVGEQTFWDALKDVQDDPKSLITYYIVKRQREQAPTIAA.

HEAT repeat units lie at residues 96-134 and 168-206; these read TLPL…EKYV and YVPV…KSDL. Disordered regions lie at residues 226-271, 510-793, and 816-839; these read ELIP…GIDT, LLNK…VVDP, and PEPV…PAAS. The span at 229–239 shows a compositional bias: low complexity; that stretch reads PTSSRPETPAA. Residues 535–545 show a composition bias toward polar residues; that stretch reads SKSTMGTSKPS. Low complexity-rich tracts occupy residues 580–594, 663–676, and 696–708; these read TTTT…SGAR, ASHA…SPSS, and QSQS…SSPS.

It belongs to the CLASP family. In terms of assembly, interacts with microtubules.

Its subcellular location is the cytoplasm. It localises to the cytoskeleton. It is found in the nucleus. The protein resides in the spindle. In terms of biological role, microtubule binding protein that promotes the stabilization of dynamic microtubules. Required for mitotic spindle formation. In Gibberella zeae (strain ATCC MYA-4620 / CBS 123657 / FGSC 9075 / NRRL 31084 / PH-1) (Wheat head blight fungus), this protein is Protein STU1 (STU1).